We begin with the raw amino-acid sequence, 236 residues long: UPF0257 lipoprotein YnfC (236 aa).

An N-terminal signal peptide occupies residues 1-16 (MKKPLLLTLLCMILAG). Cysteine 17 carries N-palmitoyl cysteine lipidation. Cysteine 17 carries the S-diacylglycerol cysteine lipid modification.

Belongs to the UPF0257 family.

Its subcellular location is the cell membrane. The polypeptide is UPF0257 lipoprotein YnfC (Salmonella paratyphi C (strain RKS4594)).